The following is a 61-amino-acid chain: Small ribosomal subunit protein uS14 (61 aa).

Residues Cys24, Cys27, Cys40, and Cys43 each coordinate Zn(2+).

The protein belongs to the universal ribosomal protein uS14 family. Zinc-binding uS14 subfamily. Part of the 30S ribosomal subunit. Contacts proteins S3 and S10. The cofactor is Zn(2+).

Its function is as follows. Binds 16S rRNA, required for the assembly of 30S particles and may also be responsible for determining the conformation of the 16S rRNA at the A site. This is Small ribosomal subunit protein uS14 from Treponema pallidum (strain Nichols).